A 141-amino-acid polypeptide reads, in one-letter code: Nucleoside diphosphate kinase (141 aa).

ATP-binding residues include Lys-11, Phe-59, Arg-87, Thr-93, Arg-104, and Asn-114. His-117 serves as the catalytic Pros-phosphohistidine intermediate.

This sequence belongs to the NDK family. Homotetramer. Mg(2+) serves as cofactor.

It localises to the cytoplasm. The enzyme catalyses a 2'-deoxyribonucleoside 5'-diphosphate + ATP = a 2'-deoxyribonucleoside 5'-triphosphate + ADP. The catalysed reaction is a ribonucleoside 5'-diphosphate + ATP = a ribonucleoside 5'-triphosphate + ADP. Major role in the synthesis of nucleoside triphosphates other than ATP. The ATP gamma phosphate is transferred to the NDP beta phosphate via a ping-pong mechanism, using a phosphorylated active-site intermediate. This Chromobacterium violaceum (strain ATCC 12472 / DSM 30191 / JCM 1249 / CCUG 213 / NBRC 12614 / NCIMB 9131 / NCTC 9757 / MK) protein is Nucleoside diphosphate kinase.